A 95-amino-acid chain; its full sequence is Aspartyl/glutamyl-tRNA(Asn/Gln) amidotransferase subunit C (95 aa).

The protein belongs to the GatC family. In terms of assembly, heterotrimer of A, B and C subunits.

It catalyses the reaction L-glutamyl-tRNA(Gln) + L-glutamine + ATP + H2O = L-glutaminyl-tRNA(Gln) + L-glutamate + ADP + phosphate + H(+). It carries out the reaction L-aspartyl-tRNA(Asn) + L-glutamine + ATP + H2O = L-asparaginyl-tRNA(Asn) + L-glutamate + ADP + phosphate + 2 H(+). In terms of biological role, allows the formation of correctly charged Asn-tRNA(Asn) or Gln-tRNA(Gln) through the transamidation of misacylated Asp-tRNA(Asn) or Glu-tRNA(Gln) in organisms which lack either or both of asparaginyl-tRNA or glutaminyl-tRNA synthetases. The reaction takes place in the presence of glutamine and ATP through an activated phospho-Asp-tRNA(Asn) or phospho-Glu-tRNA(Gln). This chain is Aspartyl/glutamyl-tRNA(Asn/Gln) amidotransferase subunit C, found in Rhizobium rhizogenes (strain K84 / ATCC BAA-868) (Agrobacterium radiobacter).